A 557-amino-acid polypeptide reads, in one-letter code: Ribonuclease J 2 (557 aa).

Residues His-76, His-78, His-144, and Glu-166 each contribute to the Zn(2+) site. A substrate-binding site is contributed by 366-370 (HASSH).

This sequence belongs to the metallo-beta-lactamase superfamily. RNA-metabolizing metallo-beta-lactamase-like family. Bacterial RNase J subfamily. In terms of assembly, homodimer, may be a subunit of the RNA degradosome. Zn(2+) serves as cofactor.

The protein localises to the cytoplasm. In terms of biological role, an RNase that has 5'-3' exonuclease and possibly endoonuclease activity. Involved in maturation of rRNA and in some organisms also mRNA maturation and/or decay. This Staphylococcus aureus (strain MRSA252) protein is Ribonuclease J 2.